A 791-amino-acid polypeptide reads, in one-letter code: Subtilisin-like protease SBT5.6 (791 aa).

Positions 1–20 are cleaved as a signal peptide; that stretch reads MKKLTSLFPLLFLIPLLASC. The propeptide at 21–108 is activation peptide; it reads AEEKQVYIVY…KSHPRKYEAH (88 aa). An Inhibitor I9 domain is found at 26–104; it reads VYIVYFGEHK…VSVFKSHPRK (79 aa). Residues 134 to 645 enclose the Peptidase S8 domain; the sequence is ADDRFRVGRN…SGHFRPTKAA (512 aa). The active-site Charge relay system is Asp-160. 2 N-linked (GlcNAc...) asparagine glycosylation sites follow: Asn-193 and Asn-219. His-235 (charge relay system) is an active-site residue. In terms of domain architecture, PA spans 400–494; the sequence is FAPLVYASNV…VTPTVVDKIL (95 aa). Asn-417 carries an N-linked (GlcNAc...) asparagine glycan. Ser-578 serves as the catalytic Charge relay system. N-linked (GlcNAc...) asparagine glycans are attached at residues Asn-666, Asn-713, and Asn-761.

This sequence belongs to the peptidase S8 family.

It is found in the secreted. The protein is Subtilisin-like protease SBT5.6 of Arabidopsis thaliana (Mouse-ear cress).